We begin with the raw amino-acid sequence, 423 residues long: Maltooligosaccharide ABC transporter solute-binding lipoprotein (423 aa).

An N-terminal signal peptide occupies residues 1 to 24 (MSSKFMKSAAVLGTATLASLLLVA). Cys25 carries N-palmitoyl cysteine lipidation. Cys25 is lipidated: S-diacylglycerol cysteine. Residues Tyr52, Asp77, Asp83, 103–104 (DR), Glu148, Asp193, Asn196, 251–254 (EGAG), Trp274, and Lys307 contribute to the substrate site.

It belongs to the bacterial solute-binding protein 1 family.

Its subcellular location is the cell membrane. Its function is as follows. Part of an ABC transporter complex involved in the uptake of maltodextrins. Binds glycogen-derived linear maltooligosaccharides increasing in size from maltotriose to maltooctaose with the highest affinity for maltotriose. Has a very weak affinity for maltose. Has also a very low affinity for maltotetraitol, indicating that the binding is selective for maltooligosaccharides with an intact reducing end. This Streptococcus pneumoniae serotype 4 (strain ATCC BAA-334 / TIGR4) protein is Maltooligosaccharide ABC transporter solute-binding lipoprotein.